Reading from the N-terminus, the 92-residue chain is MGIKLINIGFGNIVSANRLIAIVSPESAPIKRIIQEARDRGMLIDATYGRRTRAVIITDSDHVILSAVQPETVAHRLSTKGEEDEISEVEAQ.

The protein belongs to the RemA family.

In Clostridium kluyveri (strain ATCC 8527 / DSM 555 / NBRC 12016 / NCIMB 10680 / K1), this protein is Putative regulatory protein CKL_1364.